A 186-amino-acid chain; its full sequence is ATP synthase subunit delta, chloroplastic (186 aa).

This sequence belongs to the ATPase delta chain family. In terms of assembly, F-type ATPases have 2 components, F(1) - the catalytic core - and F(0) - the membrane proton channel. F(1) has five subunits: alpha(3), beta(3), gamma(1), delta(1), epsilon(1). CF(0) has four main subunits: a(1), b(1), b'(1) and c(10-14). The alpha and beta chains form an alternating ring which encloses part of the gamma chain. F(1) is attached to F(0) by a central stalk formed by the gamma and epsilon chains, while a peripheral stalk is formed by the delta, b and b' chains.

Its subcellular location is the plastid. It is found in the chloroplast thylakoid membrane. Functionally, f(1)F(0) ATP synthase produces ATP from ADP in the presence of a proton or sodium gradient. F-type ATPases consist of two structural domains, F(1) containing the extramembraneous catalytic core and F(0) containing the membrane proton channel, linked together by a central stalk and a peripheral stalk. During catalysis, ATP synthesis in the catalytic domain of F(1) is coupled via a rotary mechanism of the central stalk subunits to proton translocation. Its function is as follows. This protein is part of the stalk that links CF(0) to CF(1). It either transmits conformational changes from CF(0) to CF(1) or is implicated in proton conduction. In Porphyra purpurea (Red seaweed), this protein is ATP synthase subunit delta, chloroplastic.